The following is a 379-amino-acid chain: Cell cycle checkpoint control protein RAD9A (379 aa).

Tyr-17 bears the Phosphotyrosine mark. Residues 40-80 are possesses 3'-5' exonuclease activity; the sequence is FLFAPLFFQQYQAATPGQDLLRCKILMKSFLSVFRSLAMLE. The segment at 255 to 379 is sufficient for interaction with ABL1; that stretch reads SDTDSHSQDL…VLAEDSEGEG (125 aa). Residues 257 to 271 show a composition bias toward basic and acidic residues; it reads TDSHSQDLGSPERHQ. Disordered stretches follow at residues 257-289 and 308-379; these read TDSHSQDLGSPERHQPVPQLQAHSIPHPDDFAN and SRVL…EGEG. Ser-261, Ser-266, Ser-317, Ser-330, Ser-363, Ser-368, and Ser-375 each carry phosphoserine.

It belongs to the rad9 family. Component of the toroidal 9-1-1 (RAD9-RAD1-HUS1) complex, composed of RAD9A, RAD1 and HUS1. The 9-1-1 complex associates with LIG1, POLB, FEN1, RAD17, HDAC1, RPA1 and RPA2. The 9-1-1 complex associates with the RAD17-RFC complex. RAD9A interacts with BCL2L1, FEN1, RAD9B, ABL1, RPA1, ATAD5 and RPA2. Interacts with DNAJC7. Interacts (when phosphorylated) with TOPBP1. Constitutively phosphorylated on serine and threonine amino acids in absence of DNA damage. Hyperphosphorylated by PRKCD and ABL1 upon DNA damage. Its phosphorylation by PRKCD may be required for the formation of the 9-1-1 complex. Phosphorylated at Ser-330 and Ser-375 by CK2, promoting interaction with TOPBP1.

It is found in the nucleus. The catalysed reaction is Exonucleolytic cleavage in the 3'- to 5'-direction to yield nucleoside 5'-phosphates.. Its function is as follows. Component of the 9-1-1 cell-cycle checkpoint response complex that plays a major role in DNA repair. The 9-1-1 complex is recruited to DNA lesion upon damage by the RAD17-replication factor C (RFC) clamp loader complex. Acts then as a sliding clamp platform on DNA for several proteins involved in long-patch base excision repair (LP-BER). The 9-1-1 complex stimulates DNA polymerase beta (POLB) activity by increasing its affinity for the 3'-OH end of the primer-template and stabilizes POLB to those sites where LP-BER proceeds; endonuclease FEN1 cleavage activity on substrates with double, nick, or gap flaps of distinct sequences and lengths; and DNA ligase I (LIG1) on long-patch base excision repair substrates. The 9-1-1 complex is necessary for the recruitment of RHNO1 to sites of double-stranded breaks (DSB) occurring during the S phase. RAD9A possesses 3'-&gt;5' double stranded DNA exonuclease activity. This chain is Cell cycle checkpoint control protein RAD9A (RAD9A), found in Macaca fascicularis (Crab-eating macaque).